The sequence spans 622 residues: Chaperone protein HscA homolog (622 aa).

Belongs to the heat shock protein 70 family.

In terms of biological role, chaperone involved in the maturation of iron-sulfur cluster-containing proteins. Has a low intrinsic ATPase activity which is markedly stimulated by HscB. The sequence is that of Chaperone protein HscA homolog from Burkholderia cenocepacia (strain ATCC BAA-245 / DSM 16553 / LMG 16656 / NCTC 13227 / J2315 / CF5610) (Burkholderia cepacia (strain J2315)).